Here is a 418-residue protein sequence, read N- to C-terminus: Probable cysteine desulfurase 2 (418 aa).

K234 carries the N6-(pyridoxal phosphate)lysine modification. The active-site Cysteine persulfide intermediate is C374.

It belongs to the class-V pyridoxal-phosphate-dependent aminotransferase family. Csd subfamily. Requires pyridoxal 5'-phosphate as cofactor.

The enzyme catalyses (sulfur carrier)-H + L-cysteine = (sulfur carrier)-SH + L-alanine. Its function is as follows. Catalyzes the removal of elemental sulfur and selenium atoms from L-cysteine, L-cystine, L-selenocysteine, and L-selenocystine to produce L-alanine. The protein is Probable cysteine desulfurase 2 (csd2) of Mycobacterium leprae (strain TN).